Consider the following 229-residue polypeptide: Peptide methionine sulfoxide reductase B3, chloroplastic (229 aa).

Residues 1-71 constitute a chloroplast transit peptide; sequence MGVQHLLKLR…NHNQWAASRC (71 aa). The region spanning 102 to 223 is the MsrB domain; the sequence is EEEWEAILSP…NSISLKFIPA (122 aa). The Zn(2+) site is built by C141, C144, C187, and C190. An intrachain disulfide couples C159 to C212. The active-site Nucleophile is C212.

This sequence belongs to the MsrB Met sulfoxide reductase family. Zn(2+) is required as a cofactor.

The protein resides in the plastid. It localises to the chloroplast. It catalyses the reaction L-methionyl-[protein] + [thioredoxin]-disulfide + H2O = L-methionyl-(R)-S-oxide-[protein] + [thioredoxin]-dithiol. Its function is as follows. Catalyzes the reduction of methionine sulfoxide (MetSO) to methionine in proteins. Plays a protective role against oxidative stress by restoring activity to proteins that have been inactivated by methionine oxidation. MSRB family specifically reduces the MetSO R-enantiomer. The protein is Peptide methionine sulfoxide reductase B3, chloroplastic (MSRB3) of Oryza sativa subsp. japonica (Rice).